The sequence spans 322 residues: Phosphatidylserine decarboxylase proenzyme (322 aa).

Residues Asp-90, His-147, and Ser-254 each act as charge relay system; for autoendoproteolytic cleavage activity in the active site. The active-site Schiff-base intermediate with substrate; via pyruvic acid; for decarboxylase activity is Ser-254. Ser-254 carries the post-translational modification Pyruvic acid (Ser); by autocatalysis. Residues 293–322 (PDAEPAPLPAEEIEAEHDASPLVDDKKDQV) form a disordered region. Residues 308–322 (EHDASPLVDDKKDQV) are compositionally biased toward basic and acidic residues.

It belongs to the phosphatidylserine decarboxylase family. PSD-B subfamily. Prokaryotic type I sub-subfamily. Heterodimer of a large membrane-associated beta subunit and a small pyruvoyl-containing alpha subunit. Requires pyruvate as cofactor. Is synthesized initially as an inactive proenzyme. Formation of the active enzyme involves a self-maturation process in which the active site pyruvoyl group is generated from an internal serine residue via an autocatalytic post-translational modification. Two non-identical subunits are generated from the proenzyme in this reaction, and the pyruvate is formed at the N-terminus of the alpha chain, which is derived from the carboxyl end of the proenzyme. The autoendoproteolytic cleavage occurs by a canonical serine protease mechanism, in which the side chain hydroxyl group of the serine supplies its oxygen atom to form the C-terminus of the beta chain, while the remainder of the serine residue undergoes an oxidative deamination to produce ammonia and the pyruvoyl prosthetic group on the alpha chain. During this reaction, the Ser that is part of the protease active site of the proenzyme becomes the pyruvoyl prosthetic group, which constitutes an essential element of the active site of the mature decarboxylase.

The protein localises to the cell membrane. The catalysed reaction is a 1,2-diacyl-sn-glycero-3-phospho-L-serine + H(+) = a 1,2-diacyl-sn-glycero-3-phosphoethanolamine + CO2. It functions in the pathway phospholipid metabolism; phosphatidylethanolamine biosynthesis; phosphatidylethanolamine from CDP-diacylglycerol: step 2/2. In terms of biological role, catalyzes the formation of phosphatidylethanolamine (PtdEtn) from phosphatidylserine (PtdSer). In Escherichia coli O139:H28 (strain E24377A / ETEC), this protein is Phosphatidylserine decarboxylase proenzyme.